Here is a 1693-residue protein sequence, read N- to C-terminus: Non-structural polyprotein pORF1 (1693 aa).

Residues 56–240 (VFRPEVFWNH…HDVSNLRSWI (185 aa)) enclose the Alphavirus-like MT domain. The segment at 60 to 240 (EVFWNHPIQR…HDVSNLRSWI (181 aa)) is methyltransferase. The interval 241–439 (RTTKVTGDHP…FYAQCRRWLS (199 aa)) is Y-domain. A disulfide bond links C434 and C481. The putative protease stretch occupies residues 442–509 (FHLDPRVLVF…EAYEGSDVDP (68 aa)). The zinc-binding stretch occupies residues 510–691 (AESAISDISG…FSPGHVWESA (182 aa)). Residues H671, E673, and H686 each contribute to the Zn(2+) site. The segment at 712–778 (SSPARPDLGL…AITHQTARHR (67 aa)) is hinge. The interval 737–769 (AVLLPPPAPDPPPPPSAPALDEPASGATAGAPA) is disordered. Pro residues predominate over residues 740–753 (LPPPAPDPPPPPSA). In terms of domain architecture, Macro spans 775–921 (ARHRRLLFTY…LYLPELAARW (147 aa)). The X-domain stretch occupies residues 785 to 942 (PDGSKVFAGS…TITEDVARTA (158 aa)). Positions 934–1082 (ITEDVARTAN…RPDLGPTSWW (149 aa)) constitute a (+)RNA virus helicase ATP-binding domain. The NTPase/helicase stretch occupies residues 960-1204 (GCRVTPGVVQ…ISDAIVNNFF (245 aa)). 975–982 (GVPGSGKS) is an ATP binding site. Positions 1083 to 1216 (HVTHRCPADV…GGEIGHQRPS (134 aa)) constitute a (+)RNA virus helicase C-terminal domain. An RNA-directed RNA polymerase region spans residues 1207–1693 (GGEIGHQRPS…LTNSILCRVE (487 aa)). Positions 1454 to 1565 (SMVFENDFSE…LCSEYRQSPG (112 aa)) constitute a RdRp catalytic domain.

Belongs to the hepevirus non-structural polyprotein family. The protease domain interacts with host EIF2AK4 (via C-terminus); this interaction inhibits dimerization of EIF2AK4 and prevents EIF2AK4-mediated phosphorylation of host EIF2A. Mg(2+) is required as a cofactor. ORF1 polyprotein does not seem to be processed into distinct enzymatic domains by a viral protease belonging to ORF1, but could be processed by a host serine protease like thrombin.

Its subcellular location is the host cytoplasm. It is found in the host perinuclear region. The catalysed reaction is RNA(n) + a ribonucleoside 5'-triphosphate = RNA(n+1) + diphosphate. The enzyme catalyses GTP + S-adenosyl-L-methionine = N(7)-methyl-GTP + S-adenosyl-L-homocysteine. Putative protease: Inhibited by chymostatin. Methyltransferase: Displays a capping enzyme activity. This function is necessary since all viral RNAs are synthesized in the cytoplasm, and host capping enzymes are restricted to the nucleus. The enzymatic reaction involves a covalent link between 7-methyl-GMP and the methyltransferase, whereas eukaryotic capping enzymes form a covalent complex only with GMP. Methyltransferase catalyzes transfer of a methyl group from S-adenosylmethionine to GTP and GDP to yield m(7)GTP or m(7)GDP. GDP is a better substrate than GTP. This enzyme also displays guanylyltransferase activity to form a covalent complex, methyltransferase-m(7)GMP, from which 7-methyl-GMP is transferred to the mRNA to create the cap structure. Functionally, Y-domain: Indispensable for virus replication. In terms of biological role, putative protease: The putative protease domain although necessary for replication of the virus may not be a protease but rather a structural Zn(2+)-binding domain. Inhibits induction of IFN-beta by MDA5 and RIG-I pathways and down-regulates the expression of MDA5. Its function is as follows. NTPase/helicase: Multi-functional protein that exhibits NTPase and RNA unwinding activities. Hydrolyzes all NTPs efficiently and unwinds RNA duplexes containing 5' overhangs. Possesses a sequence independent RNA-5'-triphosphatase (RTPase) activity suggestive of its role in forming viral cap structure. Also participates in viral genome replication, RNA translocation and genome packaging/unpackaging. RNA-directed RNA polymerase: Plays an essential role in the virus replication. Binds to the 3'-end of the genomic RNA to initiate viral replication. This Hepatitis E virus genotype 1 (isolate Human/Myanmar/HEVNE8L) (HEV-1) protein is Non-structural polyprotein pORF1.